The sequence spans 352 residues: UDP-3-O-acylglucosamine N-acyltransferase (352 aa).

The active-site Proton acceptor is the His257.

It belongs to the transferase hexapeptide repeat family. LpxD subfamily. In terms of assembly, homotrimer.

The enzyme catalyses a UDP-3-O-[(3R)-3-hydroxyacyl]-alpha-D-glucosamine + a (3R)-hydroxyacyl-[ACP] = a UDP-2-N,3-O-bis[(3R)-3-hydroxyacyl]-alpha-D-glucosamine + holo-[ACP] + H(+). Its pathway is bacterial outer membrane biogenesis; LPS lipid A biosynthesis. Its function is as follows. Catalyzes the N-acylation of UDP-3-O-acylglucosamine using 3-hydroxyacyl-ACP as the acyl donor. Is involved in the biosynthesis of lipid A, a phosphorylated glycolipid that anchors the lipopolysaccharide to the outer membrane of the cell. The polypeptide is UDP-3-O-acylglucosamine N-acyltransferase (Methylobacterium sp. (strain 4-46)).